A 1249-amino-acid polypeptide reads, in one-letter code: Minor capsid protein M1249L (1249 aa).

This sequence belongs to the asfivirus M1249L family. In terms of assembly, interacts with the minor capsid protein p17 and with the hexon capsid protein p72 capsomers; these interactions form a rigid zipper structure that stabilizes the capsomers. Interacts with host IRF3.

It is found in the virion. The protein resides in the host cytoplasm. Functionally, together with the penton and the other minor capsid proteins (p17, p49), forms a complicated network immediately below the outer capsid shell, stabilizing the whole capsid. In addition, blocks IFN-beta transactivation mediated by the cGAS-STING pathway and regulates the transcriptional activity of IFN-beta. Mechanistically, suppresses the phosphorylation of host key adapter protein TBK1 and degrades host IRF3 in the cytoplasm. This Ornithodoros (relapsing fever ticks) protein is Minor capsid protein M1249L.